Consider the following 580-residue polypeptide: MLTDMDISSRASLKNITELGADLGLLPEEMMLFGHTKAKVELSVLQRLAGQRKGKLIIVTAVTPTPHGEGKTVTSIGLTQSLNAIGQKACACIRQPSMGPVFGVKGGAAGGGYAQVVPMQEMNLHLTGDIHAVSSAHNLGAAAIAARLFHEARLGKTEFEAQSGQAFLDIAPNEIRWHRVVDHNDRCLRQIHVGLGDNNGPEYGSSFDITAASELMAILALSHDLADMRARIGRLVLALNTQGQVITAEDLGVAGAMTAIMADAIKPTLMQTLNGSPCLIHSGPFANIAHGNSSIIADDIALRLADFVVTEGGFGSDMGFEKFCNIKVRQSGQAPAAAVLVTTLKALKANSGLATEVDSNAPNIHVPNINAPDQARLEAGFANLNWHINNVARYGIPVVVGINRFATDSDAELQWLMEAVNASAAFGCEISDAFSQGEAGAIALARTVVRAAETESQFKLLYPDEASLEAKLSTLAEVGYGASGVSLSIEAKQQAQQLTALGYGHLPLCMAKTPLSISHDPSLKGVPKDFVVPVRELVLHAGAGFITALVGNVMTMPGLGLKPGYLKIDIDAKGEIVGLG.

ATP is bound at residue 65–72 (TPHGEGKT).

The protein belongs to the formate--tetrahydrofolate ligase family.

The enzyme catalyses (6S)-5,6,7,8-tetrahydrofolate + formate + ATP = (6R)-10-formyltetrahydrofolate + ADP + phosphate. It functions in the pathway one-carbon metabolism; tetrahydrofolate interconversion. This chain is Formate--tetrahydrofolate ligase, found in Shewanella baltica (strain OS223).